The following is a 492-amino-acid chain: Probable endopolygalacturonase D (492 aa).

The N-terminal stretch at 1–16 (MKRSALILSFLPLVFG) is a signal peptide. Cysteine 151 and cysteine 166 are oxidised to a cystine. 4 PbH1 repeats span residues 216-238 (GTSV…AYWD), 258-280 (MYNS…EIES), 281-319 (TEHL…DIKE), and 320-341 (SSYF…AVTS). Asparagine 292 is a glycosylation site (N-linked (GlcNAc...) asparagine). Aspartate 334 serves as the catalytic Proton donor. The cysteines at positions 336 and 352 are disulfide-linked. Histidine 356 is a catalytic residue. PbH1 repeat units lie at residues 371 to 392 (VNGV…RIKT), 400 to 422 (VYNI…DVQQ), and 434 to 478 (TNGV…SITG). 2 N-linked (GlcNAc...) asparagine glycosylation sites follow: asparagine 407 and asparagine 441. Cystine bridges form between cysteine 461/cysteine 466 and cysteine 484/cysteine 491.

This sequence belongs to the glycosyl hydrolase 28 family.

Its subcellular location is the secreted. It catalyses the reaction (1,4-alpha-D-galacturonosyl)n+m + H2O = (1,4-alpha-D-galacturonosyl)n + (1,4-alpha-D-galacturonosyl)m.. In terms of biological role, involved in maceration and soft-rotting of plant tissue. Hydrolyzes the 1,4-alpha glycosidic bonds of de-esterified pectate in the smooth region of the plant cell wall. This chain is Probable endopolygalacturonase D (pgaD), found in Aspergillus flavus (strain ATCC 200026 / FGSC A1120 / IAM 13836 / NRRL 3357 / JCM 12722 / SRRC 167).